The sequence spans 208 residues: Adenylate kinase (208 aa).

10–15 provides a ligand contact to ATP; sequence GAGKGT. The segment at 30–59 is NMP; sequence STGEMLRAAVAAGTPVGLKAKDVMASGGLV. AMP-binding positions include Thr-31, Arg-36, 57–59, 85–88, and Gln-92; these read GLV and GFPR. An LID region spans residues 126–142; sequence SRVAEMTARGEQVRADD. Arg-127 contributes to the ATP binding site. AMP-binding residues include Arg-139 and Arg-150. Residue Met-178 participates in ATP binding.

The protein belongs to the adenylate kinase family. Monomer.

The protein resides in the cytoplasm. It catalyses the reaction AMP + ATP = 2 ADP. It participates in purine metabolism; AMP biosynthesis via salvage pathway; AMP from ADP: step 1/1. Its function is as follows. Catalyzes the reversible transfer of the terminal phosphate group between ATP and AMP. Plays an important role in cellular energy homeostasis and in adenine nucleotide metabolism. The protein is Adenylate kinase of Nitrobacter hamburgensis (strain DSM 10229 / NCIMB 13809 / X14).